Here is a 230-residue protein sequence, read N- to C-terminus: Large ribosomal subunit protein uL1 (230 aa).

This sequence belongs to the universal ribosomal protein uL1 family. In terms of assembly, part of the 50S ribosomal subunit.

In terms of biological role, binds directly to 23S rRNA. The L1 stalk is quite mobile in the ribosome, and is involved in E site tRNA release. Its function is as follows. Protein L1 is also a translational repressor protein, it controls the translation of the L11 operon by binding to its mRNA. This chain is Large ribosomal subunit protein uL1, found in Lactobacillus acidophilus (strain ATCC 700396 / NCK56 / N2 / NCFM).